A 323-amino-acid polypeptide reads, in one-letter code: V-type ATP synthase subunit C (323 aa).

Belongs to the V-ATPase V0D/AC39 subunit family.

Its function is as follows. Produces ATP from ADP in the presence of a proton gradient across the membrane. This chain is V-type ATP synthase subunit C, found in Thermus thermophilus (strain ATCC BAA-163 / DSM 7039 / HB27).